The following is a 492-amino-acid chain: Aspartyl/glutamyl-tRNA(Asn/Gln) amidotransferase subunit B (492 aa).

It belongs to the GatB/GatE family. GatB subfamily. As to quaternary structure, heterotrimer of A, B and C subunits.

It catalyses the reaction L-glutamyl-tRNA(Gln) + L-glutamine + ATP + H2O = L-glutaminyl-tRNA(Gln) + L-glutamate + ADP + phosphate + H(+). It carries out the reaction L-aspartyl-tRNA(Asn) + L-glutamine + ATP + H2O = L-asparaginyl-tRNA(Asn) + L-glutamate + ADP + phosphate + 2 H(+). Functionally, allows the formation of correctly charged Asn-tRNA(Asn) or Gln-tRNA(Gln) through the transamidation of misacylated Asp-tRNA(Asn) or Glu-tRNA(Gln) in organisms which lack either or both of asparaginyl-tRNA or glutaminyl-tRNA synthetases. The reaction takes place in the presence of glutamine and ATP through an activated phospho-Asp-tRNA(Asn) or phospho-Glu-tRNA(Gln). This Bradyrhizobium diazoefficiens (strain JCM 10833 / BCRC 13528 / IAM 13628 / NBRC 14792 / USDA 110) protein is Aspartyl/glutamyl-tRNA(Asn/Gln) amidotransferase subunit B.